The sequence spans 503 residues: Na(+)-translocating NADH-quinone reductase subunit B (503 aa).

The next 4 membrane-spanning stretches (helical) occupy residues 55–75, 120–142, 161–181, and 186–206; these read MILV…NSGV, IFLP…FAVI, TLPP…GVVV, and FGGT…FLFF. FMN phosphoryl threonine is present on T248. A run of 5 helical transmembrane segments spans residues 361–381, 387–407, 417–437, 452–472, and 475–495; these read TSTF…IASW, FGIG…LIVG, FFIP…LVFM, WIYG…NPAY, and GVML…YFAV.

Belongs to the NqrB/RnfD family. As to quaternary structure, composed of six subunits; NqrA, NqrB, NqrC, NqrD, NqrE and NqrF. The cofactor is FMN.

The protein localises to the cell inner membrane. It catalyses the reaction a ubiquinone + n Na(+)(in) + NADH + H(+) = a ubiquinol + n Na(+)(out) + NAD(+). Functionally, NQR complex catalyzes the reduction of ubiquinone-1 to ubiquinol by two successive reactions, coupled with the transport of Na(+) ions from the cytoplasm to the periplasm. NqrA to NqrE are probably involved in the second step, the conversion of ubisemiquinone to ubiquinol. This is Na(+)-translocating NADH-quinone reductase subunit B from Chlamydia felis (strain Fe/C-56) (Chlamydophila felis).